Consider the following 269-residue polypeptide: Cytochrome c oxidase subunit 3 (269 aa).

7 consecutive transmembrane segments (helical) span residues 21–41 (PWPM…GLTA), 49–69 (MFML…FKDI), 90–110 (GFLM…WAFL), 132–152 (ISAA…GVTM), 167–187 (TLYG…FQGL), 205–225 (FFAL…MLAM), and 247–267 (ILYL…VYWW).

Belongs to the cytochrome c oxidase subunit 3 family. In terms of assembly, component of the cytochrome c oxidase (complex IV, CIV), a multisubunit enzyme composed of a catalytic core of 3 subunits and several supernumerary subunits. The complex exists as a monomer or a dimer and forms supercomplexes (SCs) in the inner mitochondrial membrane with ubiquinol-cytochrome c oxidoreductase (cytochrome b-c1 complex, complex III, CIII).

The protein localises to the mitochondrion inner membrane. It carries out the reaction 4 Fe(II)-[cytochrome c] + O2 + 8 H(+)(in) = 4 Fe(III)-[cytochrome c] + 2 H2O + 4 H(+)(out). In terms of biological role, component of the cytochrome c oxidase, the last enzyme in the mitochondrial electron transport chain which drives oxidative phosphorylation. The respiratory chain contains 3 multisubunit complexes succinate dehydrogenase (complex II, CII), ubiquinol-cytochrome c oxidoreductase (cytochrome b-c1 complex, complex III, CIII) and cytochrome c oxidase (complex IV, CIV), that cooperate to transfer electrons derived from NADH and succinate to molecular oxygen, creating an electrochemical gradient over the inner membrane that drives transmembrane transport and the ATP synthase. Cytochrome c oxidase is the component of the respiratory chain that catalyzes the reduction of oxygen to water. Electrons originating from reduced cytochrome c in the intermembrane space (IMS) are transferred via the dinuclear copper A center (CU(A)) of subunit 2 and heme A of subunit 1 to the active site in subunit 1, a binuclear center (BNC) formed by heme A3 and copper B (CU(B)). The BNC reduces molecular oxygen to 2 water molecules using 4 electrons from cytochrome c in the IMS and 4 protons from the mitochondrial matrix. The protein is Cytochrome c oxidase subunit 3 (COX3) of Debaryomyces hansenii (strain ATCC 36239 / CBS 767 / BCRC 21394 / JCM 1990 / NBRC 0083 / IGC 2968) (Yeast).